The sequence spans 2193 residues: Genome polyprotein (2193 aa).

Gly2 is lipidated: N-myristoyl glycine; by host. The Cytoplasmic portion of the chain corresponds to 2 to 1503 (GAQVSTQKTG…HVSRAFICLQ (1502 aa)). The segment at 565–582 (QLLQGDVEEAVNRAVARV) is amphipathic alpha-helix. Residues His880 and Asp898 each act as for protease 2A activity in the active site. Positions 915 and 917 each coordinate Zn(2+). The active-site For protease 2A activity is the Cys969. Cys975 and His977 together coordinate Zn(2+). The membrane-binding stretch occupies residues 1109-1181 (SNGWLKKFTE…EQSAPSQSDQ (73 aa)). The segment at 1109-1247 (SNGWLKKFTE…SPGAGKSVAT (139 aa)) is oligomerization. The interval 1130-1134 (AIKIQ) is RNA-binding. Residues 1213 to 1369 (EKKMSNYIQF…SMYSQNGKIN (157 aa)) form the SF3 helicase domain. Zn(2+) contacts are provided by Cys1377, Cys1389, and Cys1394. A C4-type; degenerate zinc finger spans residues 1377-1394 (CDEECCPVNFKRCCPLVC). The interval 1421–1428 (EYNHRHSV) is RNA-binding. The tract at residues 1432 to 1437 (LEALFQ) is oligomerization. An intramembrane segment occupies 1504-1519 (ALTTFVSVAGIIYIIY). Topologically, residues 1520 to 2193 (KLFAGFQGAY…TLRRKWLDSF (674 aa)) are cytoplasmic. Tyr1529 is modified (O-(5'-phospho-RNA)-tyrosine). Positions 1549–1727 (GPAFEFAVAM…FSAALLRHYF (179 aa)) constitute a Peptidase C3 domain. Residues His1588, Glu1619, and Cys1695 each act as for protease 3C activity in the active site. A RdRp catalytic domain is found at 1958-2074 (GHLIAFDYSG…SYPWPIDASL (117 aa)). Mg(2+)-binding residues include Asp1964 and Asp2060.

It belongs to the picornaviruses polyprotein family. As to quaternary structure, interacts with capsid protein VP1 and capsid protein VP3 to form heterotrimeric protomers. In terms of assembly, interacts with capsid protein VP0, and capsid protein VP3 to form heterotrimeric protomers. Five protomers subsequently associate to form pentamers which serve as building blocks for the capsid. Interacts with capsid protein VP2, capsid protein VP3 and capsid protein VP4 following cleavage of capsid protein VP0. Interacts with capsid protein VP1 and capsid protein VP3 in the mature capsid. Interacts with host CD55; this interaction promotes virus attachment to the host cell and subsequent internalization. As to quaternary structure, interacts with capsid protein VP0 and capsid protein VP1 to form heterotrimeric protomers. Five protomers subsequently associate to form pentamers which serve as building blocks for the capsid. Interacts with capsid protein VP4 in the mature capsid. Interacts with protein 2C; this interaction may be important for virion morphogenesis. Interacts with host CD55; this interaction promotes virus attachment to the host cell and subsequent internalization. In terms of assembly, interacts with capsid protein VP1 and capsid protein VP3. Homodimer. As to quaternary structure, homohexamer; forms a hexameric ring structure with 6-fold symmetry characteristic of AAA+ ATPases. Interacts (via N-terminus) with host RTN3 (via reticulon domain); this interaction is important for viral replication. Interacts with capsid protein VP3; this interaction may be important for virion morphogenesis. In terms of assembly, interacts with protein 3CD. Homodimer. Interacts with host GBF1. Interacts (via GOLD domain) with host ACBD3 (via GOLD domain); this interaction allows the formation of a viral protein 3A/ACBD3 heterotetramer with a 2:2 stoichiometry, which will stimulate the recruitment of host PI4KB in order to synthesize PI4P at the viral RNA replication sites. As to quaternary structure, interacts with RNA-directed RNA polymerase. In terms of assembly, interacts with protein 3AB and with RNA-directed RNA polymerase. Interacts with Viral protein genome-linked and with protein 3CD. Mg(2+) serves as cofactor. In terms of processing, specific enzymatic cleavages in vivo by the viral proteases yield processing intermediates and the mature proteins. Myristoylation is required for the formation of pentamers during virus assembly. Further assembly of 12 pentamers and a molecule of genomic RNA generates the provirion. Post-translationally, during virion maturation, immature virions are rendered infectious following cleavage of VP0 into VP4 and VP2. This maturation seems to be an autocatalytic event triggered by the presence of RNA in the capsid and it is followed by a conformational change infectious virion. In terms of processing, myristoylation is required during RNA encapsidation and formation of the mature virus particle. VPg is uridylylated by the polymerase into VPg-pUpU. This acts as a nucleotide-peptide primer for the genomic RNA replication.

It localises to the virion. Its subcellular location is the host cytoplasm. It is found in the host cytoplasmic vesicle membrane. The protein resides in the host nucleus. The enzyme catalyses a ribonucleoside 5'-triphosphate + H2O = a ribonucleoside 5'-diphosphate + phosphate + H(+). The catalysed reaction is Selective cleavage of Tyr-|-Gly bond in the picornavirus polyprotein.. It carries out the reaction RNA(n) + a ribonucleoside 5'-triphosphate = RNA(n+1) + diphosphate. It catalyses the reaction Selective cleavage of Gln-|-Gly bond in the poliovirus polyprotein. In other picornavirus reactions Glu may be substituted for Gln, and Ser or Thr for Gly.. With respect to regulation, replication or transcription is subject to high level of random mutations by the nucleotide analog ribavirin. Functionally, forms an icosahedral capsid of pseudo T=3 symmetry with capsid proteins VP2 and VP3. The capsid is 300 Angstroms in diameter, composed of 60 copies of each capsid protein and enclosing the viral positive strand RNA genome. Capsid protein VP1 mainly forms the vertices of the capsid. Capsid protein VP1 interacts with host cell receptor to provide virion attachment to target host cells. This attachment induces virion internalization. Tyrosine kinases are probably involved in the entry process. After binding to its receptor, the capsid undergoes conformational changes. Capsid protein VP1 N-terminus (that contains an amphipathic alpha-helix) and capsid protein VP4 are externalized. Together, they shape a pore in the host membrane through which viral genome is translocated to host cell cytoplasm. Its function is as follows. Forms an icosahedral capsid of pseudo T=3 symmetry with capsid proteins VP2 and VP3. The capsid is 300 Angstroms in diameter, composed of 60 copies of each capsid protein and enclosing the viral positive strand RNA genome. In terms of biological role, lies on the inner surface of the capsid shell. After binding to the host receptor, the capsid undergoes conformational changes. Capsid protein VP4 is released, Capsid protein VP1 N-terminus is externalized, and together, they shape a pore in the host membrane through which the viral genome is translocated into the host cell cytoplasm. Component of immature procapsids, which is cleaved into capsid proteins VP4 and VP2 after maturation. Allows the capsid to remain inactive before the maturation step. Functionally, cysteine protease that cleaves viral polyprotein and specific host proteins. It is responsible for the autocatalytic cleavage between the P1 and P2 regions, which is the first cleavage occurring in the polyprotein. Also cleaves the host translation initiation factor EIF4G1, in order to shut down the capped cellular mRNA translation. Inhibits the host nucleus-cytoplasm protein and RNA trafficking by cleaving host members of the nuclear pores. Counteracts stress granule formation probably by antagonizing its assembly or promoting its dissassembly. Its function is as follows. Plays an essential role in the virus replication cycle by acting as a viroporin. Creates a pore in the host endoplasmic reticulum and as a consequence releases Ca2+ in the cytoplasm of infected cell. In turn, high levels of cytoplasmic calcium may trigger membrane trafficking and transport of viral ER-associated proteins to viroplasms, sites of viral genome replication. In terms of biological role, induces and associates with structural rearrangements of intracellular membranes. Displays RNA-binding, nucleotide binding and NTPase activities. May play a role in virion morphogenesis and viral RNA encapsidation by interacting with the capsid protein VP3. Localizes the viral replication complex to the surface of membranous vesicles. Together with protein 3CD binds the Cis-Active RNA Element (CRE) which is involved in RNA synthesis initiation. Acts as a cofactor to stimulate the activity of 3D polymerase, maybe through a nucleid acid chaperone activity. Functionally, localizes the viral replication complex to the surface of membranous vesicles. It inhibits host cell endoplasmic reticulum-to-Golgi apparatus transport and causes the disassembly of the Golgi complex, possibly through GBF1 interaction. This would result in depletion of MHC, trail receptors and IFN receptors at the host cell surface. Plays an essential role in viral RNA replication by recruiting ACBD3 and PI4KB at the viral replication sites, thereby allowing the formation of the rearranged membranous structures where viral replication takes place. Its function is as follows. Acts as a primer for viral RNA replication and remains covalently bound to viral genomic RNA. VPg is uridylylated prior to priming replication into VPg-pUpU. The oriI viral genomic sequence may act as a template for this. The VPg-pUpU is then used as primer on the genomic RNA poly(A) by the RNA-dependent RNA polymerase to replicate the viral genome. During genome replication, the VPg-RNA linkage is removed by the host TDP2, thereby accelerating replication. During the late stage of the replication cycle, host TDP2 is excluded from sites of viral RNA synthesis and encapsidation, allowing for the generation of progeny virions. In terms of biological role, involved in the viral replication complex and viral polypeptide maturation. It exhibits protease activity with a specificity and catalytic efficiency that is different from protease 3C. Protein 3CD lacks polymerase activity. Protein 3CD binds to the 5'UTR of the viral genome. Replicates the viral genomic RNA on the surface of intracellular membranes. May form linear arrays of subunits that propagate along a strong head-to-tail interaction called interface-I. Covalently attaches UMP to a tyrosine of VPg, which is used to prime RNA synthesis. The positive stranded RNA genome is first replicated at virus induced membranous vesicles, creating a dsRNA genomic replication form. This dsRNA is then used as template to synthesize positive stranded RNA genomes. ss(+)RNA genomes are either translated, replicated or encapsidated. Functionally, major viral protease that mediates proteolytic processing of the polyprotein. Cleaves host EIF5B, contributing to host translation shutoff. Also cleaves host PABPC1, contributing to host translation shutoff. Cleaves host NLRP1, triggers host N-glycine-mediated degradation of the autoinhibitory NLRP1 N-terminal fragment. This Echovirus 12 (strain Travis) protein is Genome polyprotein.